We begin with the raw amino-acid sequence, 471 residues long: MRFLFLMITLTALTGYILADEQPTFRWAVVHDPSIIKVGNMYYVFGTHLQVAKSKDLMHWEQINTSAHDKNPIIPNINEELKETLSWARTRNDIWAPQVIQLSDGRYYMYYCASTFGSPRSAIGIAVSDDIEGPYKHYAVIVKSGQVYSVDGPSEDGTPYDSRKHPNALDPGVFYDKEGNLWMVYGSWFGGIYILKLDPNTGLPLPGQGYGKRLVGGNHSSMEGPYILYSPDTDYYYLFLSFGGLDYRGGYNIRVARSKNPNGPYYDPEGKSMENCMGSKTVISNYGAKLVGNFILSESNTIDFKAFGYVSPGHNSAYYDPETGKYFIFFHTRFPGRGETYQLRVHQLFLNEDGWFVMAPFPYGGETVSKLPNEEIVGEYQFINHGKEITDKIKQPVRIKLNSDGSITGAVEGRWERKEHYITLKIIEGNTTVIYKGVLLKQWHYSEKKWVTVFTALSNQGVSVWGIRVEE.

The N-terminal stretch at 1 to 19 (MRFLFLMITLTALTGYILA) is a signal peptide. Asp-32 (proton acceptor) is an active-site residue. Substrate is bound by residues Asp-32, Gly-117, 167–170 (NALD), 187–189 (SWF), and 219–223 (HSSME). Catalysis depends on Glu-223, which acts as the Proton donor. Residue His-314 participates in Ca(2+) binding.

The protein belongs to the glycosyl hydrolase 43 family. As to quaternary structure, monomer. Requires Ca(2+) as cofactor.

Its subcellular location is the secreted. The catalysed reaction is Endohydrolysis of (1-&gt;5)-alpha-arabinofuranosidic linkages in (1-&gt;5)-arabinans.. Its pathway is glycan metabolism; L-arabinan degradation. Functionally, involved in the degradation of arabinan and is a key enzyme in the complete degradation of the plant cell wall. Catalyzes the internal cleavage of alpha-(1-&gt;5)-L-arabinofuranosyl residues in different arabinan-containing polysaccharides, and releases arabinotriose and arabinobiose as end products. It acts on branched arabinan (from sugar beet), but more slowly when compared to linear or debranched arabinan. This is Extracellular endo-alpha-(1-&gt;5)-L-arabinanase from Thermotoga petrophila (strain ATCC BAA-488 / DSM 13995 / JCM 10881 / RKU-1).